The primary structure comprises 262 residues: tRNA pseudouridine synthase A (262 aa).

Asp-52 (nucleophile) is an active-site residue. Tyr-110 serves as a coordination point for substrate.

This sequence belongs to the tRNA pseudouridine synthase TruA family. Homodimer.

It carries out the reaction uridine(38/39/40) in tRNA = pseudouridine(38/39/40) in tRNA. Functionally, formation of pseudouridine at positions 38, 39 and 40 in the anticodon stem and loop of transfer RNAs. The chain is tRNA pseudouridine synthase A from Hydrogenovibrio crunogenus (strain DSM 25203 / XCL-2) (Thiomicrospira crunogena).